A 507-amino-acid chain; its full sequence is Monoogygenase CPUR_05431 (507 aa).

This sequence belongs to the PheA/TfdB FAD monooxygenase family. Requires FAD as cofactor.

Its pathway is pigment biosynthesis. Its function is as follows. Monoogygenase; part of the ergochrome gene cluster responsible for the typical purple-black color of the ergot sclerotia. The ergochrome gene cluster produces several ergot pigments including the yellow ergochrome secalonic acid and its derivatives, as well as the red anthraquinones endocrocin and clavorubin. The pathway begins with the synthesis of atrochrysone thioester by the polyketide synthase (PKS) CPUR_05437. The atrochrysone carboxyl ACP thioesterase CPUR_05436 then breaks the thioester bond and releases the atrochrysone carboxylic acid from CPUR_05437. The atrochrysone carboxylic acid is then converted to atrochrysone which is further transformed into emodin anthrone. The next step is performed by the anthrone oxygenase CPUR_05434 that catalyzes the oxidation of emodinanthrone to emodin. Emodin is further modified to yield monodictyphenone via several steps involving CPUR_05427, CPUR_05428, CPUR_05429 and CPUR_05430. The short chain dehydrogenase/reductase CPUR_05418 then catalyzes the C-5 ketoreduction to give the xanthone skeleton of the monomeric units. Ergochromes formation requires further dimerization steps of different xanthone units, probably catalyzed by the cytochrome P450 monooxygenase CPUR_05419. CPUR_05425, CPUR_05426 and CPUR_05431 are unique to Claviceps, thus it is likely that they are involved in further modification of xanthone units or in their dimerization. The yellow ergochromes and the red anthraquinone pigments endocrocin and clavorubin are products from the same PKS derived precursors and the latter are likely shunt products in the pathway of xanthone biosynthesis. It is proposed that atrochrysone carboxylic acid released from the PKS CPUR_05437 can also be converted to endocrocin anthrone which is further oxidized into endocrocin by CPUR_05435. Endocrocin could be then modified to clavorubin, possibly by CPUR_05423 and CPUR_05431. Clavorubin is the principal anthraquinone metabolite produced by the cluster with a much higher yield compared to endocrocin. The chain is Monoogygenase CPUR_05431 from Claviceps purpurea (strain 20.1) (Ergot fungus).